A 229-amino-acid polypeptide reads, in one-letter code: Enolase-phosphatase E1 (229 aa).

This sequence belongs to the HAD-like hydrolase superfamily. MasA/MtnC family. Monomer. Mg(2+) serves as cofactor.

It catalyses the reaction 5-methylsulfanyl-2,3-dioxopentyl phosphate + H2O = 1,2-dihydroxy-5-(methylsulfanyl)pent-1-en-3-one + phosphate. It functions in the pathway amino-acid biosynthesis; L-methionine biosynthesis via salvage pathway; L-methionine from S-methyl-5-thio-alpha-D-ribose 1-phosphate: step 3/6. It participates in amino-acid biosynthesis; L-methionine biosynthesis via salvage pathway; L-methionine from S-methyl-5-thio-alpha-D-ribose 1-phosphate: step 4/6. Bifunctional enzyme that catalyzes the enolization of 2,3-diketo-5-methylthiopentyl-1-phosphate (DK-MTP-1-P) into the intermediate 2-hydroxy-3-keto-5-methylthiopentenyl-1-phosphate (HK-MTPenyl-1-P), which is then dephosphorylated to form the acireductone 1,2-dihydroxy-3-keto-5-methylthiopentene (DHK-MTPene). The chain is Enolase-phosphatase E1 from Yersinia pseudotuberculosis serotype O:1b (strain IP 31758).